Consider the following 459-residue polypeptide: DPEYAIKETDLLALFRCTPQPGVDPVEAAAALAGESSTATWTVVWTDLLTACDLYRAKAYRVDPVPSAADTYFCYIAYDIDLFEEGSLANLTASIIGNIFGFKAVKALRLEDMRMPYALLKTYQGPATGLVVERERLDKFGRPLLGATVKPKLGLSGKNYGRVVFEGLKGGLDFLKDDENINSQPFMRYRERFLYSMEGVNHAAAMTGEVKGHYLNTTGATMEDMYERADFAKELGSVIVMIDLVIGYTAIQSMAKWSRKTDMILHLHRAGNSTYSRQKTHGMNFRVICKWMRMSGVDHIHAGTVVGKLEGDPLMIKGFYNTLLDFKTDVNLPQGLFFAQDWASLRKCVPVASGGIHCGQMHQLINYLGDDVVLQFGGGTIGHPDGIQAGATANRVALEAMVIARNEGRDYISEGPQILRDAAKTCGPLQTALDLWKDITFNYASTDTADFVETPTANV.

Substrate contacts are provided by Asn-98 and Thr-148. The active-site Proton acceptor is Lys-150. A substrate-binding site is contributed by Lys-152. The Mg(2+) site is built by Lys-176, Asp-178, and Glu-179. N6-carboxylysine is present on Lys-176. Catalysis depends on His-268, which acts as the Proton acceptor. Arg-269, His-301, and Ser-353 together coordinate substrate.

Belongs to the RuBisCO large chain family. Type I subfamily. As to quaternary structure, heterohexadecamer of 8 large chains and 8 small chains. Mg(2+) is required as a cofactor.

Its subcellular location is the plastid. It is found in the chloroplast. The enzyme catalyses 2 (2R)-3-phosphoglycerate + 2 H(+) = D-ribulose 1,5-bisphosphate + CO2 + H2O. The catalysed reaction is D-ribulose 1,5-bisphosphate + O2 = 2-phosphoglycolate + (2R)-3-phosphoglycerate + 2 H(+). Functionally, ruBisCO catalyzes two reactions: the carboxylation of D-ribulose 1,5-bisphosphate, the primary event in carbon dioxide fixation, as well as the oxidative fragmentation of the pentose substrate in the photorespiration process. Both reactions occur simultaneously and in competition at the same active site. This chain is Ribulose bisphosphate carboxylase large chain (rbcL), found in Calyptrosphaera sphaeroidea.